The primary structure comprises 95 residues: Aspartyl/glutamyl-tRNA(Asn/Gln) amidotransferase subunit C (95 aa).

It belongs to the GatC family. As to quaternary structure, heterotrimer of A, B and C subunits.

The enzyme catalyses L-glutamyl-tRNA(Gln) + L-glutamine + ATP + H2O = L-glutaminyl-tRNA(Gln) + L-glutamate + ADP + phosphate + H(+). The catalysed reaction is L-aspartyl-tRNA(Asn) + L-glutamine + ATP + H2O = L-asparaginyl-tRNA(Asn) + L-glutamate + ADP + phosphate + 2 H(+). Allows the formation of correctly charged Asn-tRNA(Asn) or Gln-tRNA(Gln) through the transamidation of misacylated Asp-tRNA(Asn) or Glu-tRNA(Gln) in organisms which lack either or both of asparaginyl-tRNA or glutaminyl-tRNA synthetases. The reaction takes place in the presence of glutamine and ATP through an activated phospho-Asp-tRNA(Asn) or phospho-Glu-tRNA(Gln). This is Aspartyl/glutamyl-tRNA(Asn/Gln) amidotransferase subunit C from Beijerinckia indica subsp. indica (strain ATCC 9039 / DSM 1715 / NCIMB 8712).